Here is a 910-residue protein sequence, read N- to C-terminus: MDRKVAREFRHKVDFLIENDAEKDYLYDVLRMYHQTMDVAVLVGDLKLVINEPNRLPLFDAIRPLIPLKHQVEYDQLTPRRSRKLKEVRLDRLHPEGLGLSVRGGLEFGCGLFISHLIKGGQADSVGLQVGDEIVRINGYSISSCTHEEVINLIRTKKTVSIKVRHIGLIPVKSSPEESLKWQYVDQFVSESGGVRGGLGSPGNRTTKEKKVFISLVGSRGLGCSISSGPIQKPGIFVSHVKPGSLSAEVGLETGDQIVEVNGIDFTNLDHKEAVNVLKSSRSLTISIVAGAGRELFMTDRERLEEARQRELQRQELLMQKRLAMESNKILQEQQEMERQRRKEIAQKAAEENERYRKEMEQISEEEEKFKKQWEEDWGSKEQLILPKTITAEVHPVPLRKPKSFGWFYRYDGKFPTIRKKAKEKKKAKYDSLQDLRKNKKELEFEQKLYKEKEEMLEKEKQLKINRLAQEVSETEREDLEESEKTQYWVERLCQTRLEQISSAENEIPEMTTGPPPPPPSVSPLAPPLRRFAGGIHLHTTDLDDIPLDMFYYPPKTPSALPVMPHPPSVNSPSKVPAPPVLPSSGHVSSSSSPWVQRTPPPIPIPPPPSIPTQDLTPTRPLPSALEEALGNHPFRTGDPGHPADDWEANTHSGKPSSSPTTERSFPPAPKTFCPSPQPPRGPGVSTISKPVMVHQEHNFVYRPAVKSEVLPQEMLKRMVVYQTAFRQDFRKYEEGFDPYSMFSPEQIAGKDVRLLRIKKEGSLDLALEGGVDSPVGKVVVSAVYEGGAAERHGGVVKGDEIMAINGKIVTDYTLAEAEAALQKAWNQGGDWIDLVVAVCPPKEYDDELSSLPSSAAESPQLARKQLEAYEPVCRHGFFLQLEPTNLLLKSRERNQTDPSWRPASSAPSP.

The segment at 1–86 is N-terminal domain; it reads MDRKVAREFR…LTPRRSRKLK (86 aa). PDZ domains follow at residues 87 to 171 and 211 to 295; these read EVRL…GLIP and KVFI…AGRE. The segment at 194 to 833 is mediates interaction with MYO7B; sequence GVRGGLGSPG…KAWNQGGDWI (640 aa). Ser219 is modified (phosphoserine). 2 coiled-coil regions span residues 299 to 377 and 417 to 482; these read TDRE…WEED and TIRK…DLEE. The tract at residues 563-688 is disordered; the sequence is VMPHPPSVNS…PPRGPGVSTI (126 aa). The span at 564–582 shows a compositional bias: pro residues; sequence MPHPPSVNSPSKVPAPPVL. Low complexity predominate over residues 583 to 596; that stretch reads PSSGHVSSSSSPWV. Over residues 599–611 the composition is skewed to pro residues; it reads TPPPIPIPPPPSI. Positions 650–664 are enriched in polar residues; sequence NTHSGKPSSSPTTER. Positions 752–839 constitute a PDZ 3 domain; the sequence is DVRLLRIKKE…GDWIDLVVAV (88 aa). The disordered stretch occupies residues 890 to 910; sequence KSRERNQTDPSWRPASSAPSP. Positions 899 to 910 are enriched in low complexity; the sequence is PSWRPASSAPSP.

In terms of assembly, part of the IMAC/intermicrovillar adhesion complex/intermicrovillar tip-link complex composed of ANKS4B, MYO7B, USH1C, CDHR2 and CDHR5. Part of a complex composed of USH1C, USH1G and MYO7A. Interacts with F-actin. Interacts with USH2A. Interacts with SLC4A7. Interacts (via PDZ1 domain) with the C-terminus of USHBP1. Interacts (via N-terminus and PDZ 2 domain) with CDH23. Interacts with USH1G. Interacts with MYO7B. Interacts with CDHR2 and CDHR5; may mediate their interaction with MYO7B at the microvilli tip. Interacts (via PDZ 1 domain) with ANKS4B. Interacts (via PDZ 1 domain) with DOCK4. In terms of tissue distribution, detected in stereocilia of cochlear hair cells (at protein level). Isoform 1 is expressed in the eye, cochlea, vestibule, heart, kidney, small intestine and testis; it is barely visible in skeletal muscle, liver, and lung and is absent from the brain. Isoforms 2 and 3 are expressed in the cochlea and vestibule.

The protein localises to the cytoplasm. Its subcellular location is the cytosol. It localises to the cytoskeleton. It is found in the cell projection. The protein resides in the microvillus. Anchoring/scaffolding protein that is a part of the functional network formed by USH1C, USH1G, CDH23 and MYO7A that mediates mechanotransduction in cochlear hair cells. Required for normal development and maintenance of cochlear hair cell bundles. As part of the intermicrovillar adhesion complex/IMAC plays a role in brush border differentiation, controlling microvilli organization and length. Probably plays a central regulatory role in the assembly of the complex, recruiting CDHR2, CDHR5 and MYO7B to the microvilli tips. The sequence is that of Harmonin (Ush1c) from Mus musculus (Mouse).